A 2032-amino-acid chain; its full sequence is Transient receptor potential channel (2032 aa).

The span at 129–139 (KKTRKHRRRRS) shows a compositional bias: basic residues. Disordered stretches follow at residues 129–162 (KKTR…GHAI), 197–223 (QSKG…AVPT), 831–860 (KKAM…MGGV), 912–945 (ANPM…GSQT), and 1120–1211 (AAEH…EAGN). Polar residues-rich tracts occupy residues 839-855 (SRPS…QSTE), 935-945 (SLTSASDGSQT), and 1120-1129 (AAEHQNDMNY). The segment covering 1130-1149 (SSSSSSSSSSSSSSSSSDSS) has biased composition (low complexity). Residues 1171-1185 (TSQGSAQSLNITSLF) show a composition bias toward polar residues. A run of 5 helical transmembrane segments spans residues 1310 to 1330 (FWSW…TLLV), 1332 to 1352 (TPPR…AFGL), 1374 to 1394 (VCSF…VGFF), 1439 to 1459 (MIQN…SFGL), and 1535 to 1555 (LMTF…IAIF). Disordered stretches follow at residues 1753–1779 (GTDP…RIRR), 1853–1909 (HPER…SRDQ), 1935–1982 (EEED…EEVD), and 1999–2032 (LNEE…CSDV). Acidic residues predominate over residues 1935–1947 (EEEDEEEDDEEDD). The span at 1951–1962 (RHHIHPRRKSSR) shows a compositional bias: basic residues. Polar residues predominate over residues 2016–2032 (SPSSSRADLTSQKCSDV).

Belongs to the transient receptor (TC 1.A.4) family. LTrpC subfamily. Gonads.

The protein localises to the membrane. Its function is as follows. Required for initiation and continuation of postembryonic mitotic cell divisions of gonadal cells Z1 and Z4. Zygotic expression is necessary for hermaphrodite fertility. May be a cation channel. The polypeptide is Transient receptor potential channel (gon-2) (Caenorhabditis elegans).